A 415-amino-acid chain; its full sequence is Acetate kinase (415 aa).

Asparagine 8 contacts Mg(2+). Lysine 15 is an ATP binding site. Position 106 (arginine 106) interacts with substrate. The active-site Proton donor/acceptor is aspartate 163. Residues 222–226 (HLGNG), 296–298 (DLR), and 344–348 (GIGEN) each bind ATP. Glutamate 397 serves as a coordination point for Mg(2+).

The protein belongs to the acetokinase family. As to quaternary structure, homodimer. It depends on Mg(2+) as a cofactor. Mn(2+) is required as a cofactor.

It is found in the cytoplasm. It carries out the reaction acetate + ATP = acetyl phosphate + ADP. The protein operates within metabolic intermediate biosynthesis; acetyl-CoA biosynthesis; acetyl-CoA from acetate: step 1/2. Catalyzes the formation of acetyl phosphate from acetate and ATP. Can also catalyze the reverse reaction. The polypeptide is Acetate kinase (Thermosynechococcus vestitus (strain NIES-2133 / IAM M-273 / BP-1)).